A 163-amino-acid chain; its full sequence is NADH-quinone oxidoreductase subunit I (163 aa).

4Fe-4S ferredoxin-type domains are found at residues 53–83 (LRRY…IEAG) and 94–123 (VRYD…EGPN). Residues Cys-63, Cys-66, Cys-69, Cys-73, Cys-103, Cys-106, Cys-109, and Cys-113 each coordinate [4Fe-4S] cluster.

Belongs to the complex I 23 kDa subunit family. As to quaternary structure, NDH-1 is composed of 14 different subunits. Subunits NuoA, H, J, K, L, M, N constitute the membrane sector of the complex. [4Fe-4S] cluster serves as cofactor.

It is found in the cell inner membrane. It carries out the reaction a quinone + NADH + 5 H(+)(in) = a quinol + NAD(+) + 4 H(+)(out). NDH-1 shuttles electrons from NADH, via FMN and iron-sulfur (Fe-S) centers, to quinones in the respiratory chain. The immediate electron acceptor for the enzyme in this species is believed to be ubiquinone. Couples the redox reaction to proton translocation (for every two electrons transferred, four hydrogen ions are translocated across the cytoplasmic membrane), and thus conserves the redox energy in a proton gradient. The chain is NADH-quinone oxidoreductase subunit I from Bartonella bacilliformis (strain ATCC 35685 / KC583 / Herrer 020/F12,63).